A 242-amino-acid chain; its full sequence is Uridylate kinase (242 aa).

16 to 19 provides a ligand contact to ATP; that stretch reads KVSG. Gly58 contributes to the UMP binding site. ATP is bound by residues Gly59 and Arg63. Residues Asp78 and 139–146 contribute to the UMP site; that span reads TGNPFCTT. Residues Thr166, Gln167, Tyr172, and Asp175 each contribute to the ATP site.

The protein belongs to the UMP kinase family. Homohexamer.

The protein resides in the cytoplasm. The enzyme catalyses UMP + ATP = UDP + ADP. It participates in pyrimidine metabolism; CTP biosynthesis via de novo pathway; UDP from UMP (UMPK route): step 1/1. Its activity is regulated as follows. Inhibited by UTP. Its function is as follows. Catalyzes the reversible phosphorylation of UMP to UDP. The polypeptide is Uridylate kinase (Rickettsia prowazekii (strain Madrid E)).